The chain runs to 484 residues: Threonine synthase-like 2 (484 aa).

Lys-113 carries the N6-(pyridoxal phosphate)lysine modification.

It belongs to the threonine synthase family. Requires pyridoxal 5'-phosphate as cofactor.

Acts as a catabolic phospho-lyase on both gamma- and beta-phosphorylated substrates. Degrades O-phospho-threonine (PThr) to alpha-ketobutyrate, ammonia and phosphate. In Pongo abelii (Sumatran orangutan), this protein is Threonine synthase-like 2 (THNSL2).